The primary structure comprises 326 residues: Tetraacyldisaccharide 4'-kinase (326 aa).

An ATP-binding site is contributed by 55 to 62; it reads TAGGNGKT.

Belongs to the LpxK family.

The enzyme catalyses a lipid A disaccharide + ATP = a lipid IVA + ADP + H(+). It functions in the pathway glycolipid biosynthesis; lipid IV(A) biosynthesis; lipid IV(A) from (3R)-3-hydroxytetradecanoyl-[acyl-carrier-protein] and UDP-N-acetyl-alpha-D-glucosamine: step 6/6. Its function is as follows. Transfers the gamma-phosphate of ATP to the 4'-position of a tetraacyldisaccharide 1-phosphate intermediate (termed DS-1-P) to form tetraacyldisaccharide 1,4'-bis-phosphate (lipid IVA). The protein is Tetraacyldisaccharide 4'-kinase of Erwinia tasmaniensis (strain DSM 17950 / CFBP 7177 / CIP 109463 / NCPPB 4357 / Et1/99).